Reading from the N-terminus, the 393-residue chain is Uroporphyrinogen decarboxylase, chloroplastic (393 aa).

The segment at Met1–Val64 is disordered. Low complexity predominate over residues Ala23–Pro37. The span at Ser38–Gly50 shows a compositional bias: basic and acidic residues. Residues Arg73–Arg77, Phe92, Ser122, Asp123, Tyr200, Ser255, and His370 contribute to the substrate site.

This sequence belongs to the uroporphyrinogen decarboxylase family. In terms of assembly, homodimer.

Its subcellular location is the plastid. The protein localises to the chloroplast. The enzyme catalyses uroporphyrinogen III + 4 H(+) = coproporphyrinogen III + 4 CO2. It functions in the pathway porphyrin-containing compound metabolism; protoporphyrin-IX biosynthesis; coproporphyrinogen-III from 5-aminolevulinate: step 4/4. Functionally, catalyzes the decarboxylation of four acetate groups of uroporphyrinogen-III to yield coproporphyrinogen-III. The polypeptide is Uroporphyrinogen decarboxylase, chloroplastic (LES22) (Zea mays (Maize)).